The primary structure comprises 157 residues: Small ribosomal subunit protein uS7 (157 aa).

It belongs to the universal ribosomal protein uS7 family. Part of the 30S ribosomal subunit. Contacts proteins S9 and S11.

Functionally, one of the primary rRNA binding proteins, it binds directly to 16S rRNA where it nucleates assembly of the head domain of the 30S subunit. Is located at the subunit interface close to the decoding center, probably blocks exit of the E-site tRNA. The sequence is that of Small ribosomal subunit protein uS7 from Chlamydia pneumoniae (Chlamydophila pneumoniae).